The chain runs to 806 residues: Transitional endoplasmic reticulum ATPase (806 aa).

Ser3 is subject to Phosphoserine. ATP-binding positions include 247–253, Asn348, His384, and 521–526; these read PGTGKTL and GCGKTL. Disordered stretches follow at residues 708 to 727 and 768 to 806; these read RRER…EDDP and FGSF…DLYG. The segment covering 768–778 has biased composition (low complexity); sequence FGSFRFPSSNQ. Residues 779-794 are compositionally biased toward gly residues; that stretch reads GGSGPSQGSSGGGGGN.

Belongs to the AAA ATPase family. In terms of assembly, homohexamer.

The protein localises to the cytoplasm. It localises to the cytosol. The protein resides in the endoplasmic reticulum. Its subcellular location is the nucleus. The catalysed reaction is ATP + H2O = ADP + phosphate + H(+). Necessary for the fragmentation of Golgi stacks during mitosis and for their reassembly after mitosis. Involved in the formation of the nuclear envelope, and of the transitional endoplasmic reticulum (tER). The transfer of membranes from the endoplasmic reticulum to the Golgi apparatus occurs via 50-70 nm transition vesicles which derive from part-rough, part-smooth transitional elements of the endoplasmic reticulum (tER). Vesicle budding from the tER is an ATP-dependent process. Also involved in DNA damage response: recruited to double-strand breaks (DSBs) sites and promotes the recruitment of tp53bp1 at DNA damage sites. Together with sprtn metalloprotease, involved in the repair of covalent DNA-protein cross-links (DPCs) during DNA synthesis. Involved in interstrand cross-link repair in response to replication stress by mediating unloading of the ubiquitinated CMG helicase complex. Enhances cell cycle progression and inhibits apoptosis at low temperatures. Essential for the maturation of ubiquitin-containing autophagosomes and the clearance of ubiquitinated protein by autophagy. Acts as a negative regulator of type I interferon production by promoting ubiquitination of RIGI. May play a role in the ubiquitin-dependent sorting of membrane proteins to lysosomes where they undergo degradation. May more particularly play a role in caveolins sorting in cells. By controlling the steady-state expression of the IGF1R receptor, indirectly regulates the insulin-like growth factor receptor signaling pathway. In Danio rerio (Zebrafish), this protein is Transitional endoplasmic reticulum ATPase.